We begin with the raw amino-acid sequence, 316 residues long: PDZ and LIM domain protein 3 (316 aa).

One can recognise a PDZ domain in the interval Met1–Glu84. Phosphoserine occurs at positions 18 and 93. The residue at position 164 (Arg164) is an Omega-N-methylarginine. One can recognise an LIM zinc-binding domain in the interval Pro244–Pro303.

Interacts with ACTN2. Forms a heterodimer with PDLIM4 (via LIM domain).

It is found in the cytoplasm. The protein resides in the myofibril. It localises to the sarcomere. The protein localises to the z line. May play a role in the organization of actin filament arrays within muscle cells. This Mus musculus (Mouse) protein is PDZ and LIM domain protein 3 (Pdlim3).